The chain runs to 454 residues: Bifunctional protein GlmU (454 aa).

Positions 1–232 (MTDRTCLSIV…VDNVIGINNR (232 aa)) are pyrophosphorylase. UDP-N-acetyl-alpha-D-glucosamine is bound by residues 11–14 (LAAG), Lys-25, Gln-78, and 83–84 (GT). Residue Asp-108 participates in Mg(2+) binding. UDP-N-acetyl-alpha-D-glucosamine-binding residues include Gly-144, Glu-158, Asn-173, and Asn-230. Asn-230 serves as a coordination point for Mg(2+). A linker region spans residues 233–253 (AELAEAETIWQNRKRRELMLS). Residues 254 to 454 (GVTLIAPETV…AIKAAKSVSK (201 aa)) form an N-acetyltransferase region. The UDP-N-acetyl-alpha-D-glucosamine site is built by Arg-319 and Lys-337. His-349 (proton acceptor) is an active-site residue. Residues Tyr-352 and Asn-363 each coordinate UDP-N-acetyl-alpha-D-glucosamine. Acetyl-CoA is bound by residues Ala-366, 372–373 (NY), Ser-391, Ser-409, and Arg-426.

This sequence in the N-terminal section; belongs to the N-acetylglucosamine-1-phosphate uridyltransferase family. In the C-terminal section; belongs to the transferase hexapeptide repeat family. As to quaternary structure, homotrimer. Mg(2+) is required as a cofactor.

Its subcellular location is the cytoplasm. It catalyses the reaction alpha-D-glucosamine 1-phosphate + acetyl-CoA = N-acetyl-alpha-D-glucosamine 1-phosphate + CoA + H(+). It carries out the reaction N-acetyl-alpha-D-glucosamine 1-phosphate + UTP + H(+) = UDP-N-acetyl-alpha-D-glucosamine + diphosphate. It functions in the pathway nucleotide-sugar biosynthesis; UDP-N-acetyl-alpha-D-glucosamine biosynthesis; N-acetyl-alpha-D-glucosamine 1-phosphate from alpha-D-glucosamine 6-phosphate (route II): step 2/2. The protein operates within nucleotide-sugar biosynthesis; UDP-N-acetyl-alpha-D-glucosamine biosynthesis; UDP-N-acetyl-alpha-D-glucosamine from N-acetyl-alpha-D-glucosamine 1-phosphate: step 1/1. It participates in bacterial outer membrane biogenesis; LPS lipid A biosynthesis. Its function is as follows. Catalyzes the last two sequential reactions in the de novo biosynthetic pathway for UDP-N-acetylglucosamine (UDP-GlcNAc). The C-terminal domain catalyzes the transfer of acetyl group from acetyl coenzyme A to glucosamine-1-phosphate (GlcN-1-P) to produce N-acetylglucosamine-1-phosphate (GlcNAc-1-P), which is converted into UDP-GlcNAc by the transfer of uridine 5-monophosphate (from uridine 5-triphosphate), a reaction catalyzed by the N-terminal domain. This is Bifunctional protein GlmU from Brucella melitensis biotype 1 (strain ATCC 23456 / CCUG 17765 / NCTC 10094 / 16M).